The following is a 500-amino-acid chain: Cytochrome P450 11B1, mitochondrial (500 aa).

The N-terminal 24 residues, 1 to 24, are a transit peptide targeting the mitochondrion; that stretch reads MAFRLKSDVRLAGSWLCLRGARAL. Cys-447 contacts heme.

It belongs to the cytochrome P450 family. Heme serves as cofactor.

The protein localises to the mitochondrion inner membrane. It carries out the reaction a steroid + 2 reduced [adrenodoxin] + O2 + 2 H(+) = an 11beta-hydroxysteroid + 2 oxidized [adrenodoxin] + H2O. The enzyme catalyses 11-deoxycortisol + 2 reduced [adrenodoxin] + O2 + 2 H(+) = cortisol + 2 oxidized [adrenodoxin] + H2O. The catalysed reaction is 21-hydroxyprogesterone + 2 reduced [adrenodoxin] + O2 + 2 H(+) = corticosterone + 2 oxidized [adrenodoxin] + H2O. It catalyses the reaction 21-hydroxyprogesterone + 2 reduced [adrenodoxin] + O2 + 2 H(+) = 18-hydroxy-11-deoxycorticosterone + 2 oxidized [adrenodoxin] + H2O. It carries out the reaction 21-hydroxyprogesterone + 2 reduced [adrenodoxin] + O2 + 2 H(+) = 19-hydroxy-11-deoxycorticosterone + 2 oxidized [adrenodoxin] + H2O. The enzyme catalyses cortisol + 2 reduced [adrenodoxin] + O2 + 2 H(+) = 18-hydroxycortisol + 2 oxidized [adrenodoxin] + H2O. The catalysed reaction is 11-deoxycortisol + 2 reduced [adrenodoxin] + O2 + 2 H(+) = 18-hydroxy-11-deoxycortisol + 2 oxidized [adrenodoxin] + H2O. It participates in steroid biosynthesis; glucocorticoid biosynthesis. The protein operates within steroid hormone biosynthesis. A cytochrome P450 monooxygenase involved in the biosynthesis of adrenal corticoids. Catalyzes a variety of reactions that are essential for many species, including detoxification, defense, and the formation of endogenous chemicals like steroid hormones. Steroid 11beta, 18- and 19-hydroxylase with preferred regioselectivity at 11beta, then 18, and lastly 19. Catalyzes the hydroxylation of 11-deoxycortisol and 11-deoxycorticosterone (21-hydroxyprogesterone) at 11beta position, yielding cortisol or corticosterone, respectively, but cannot produce aldosterone. Mechanistically, uses molecular oxygen inserting one oxygen atom into a substrate for hydroxylation and reducing the second into a water molecule. Two electrons are provided by NADPH via a two-protein mitochondrial transfer system comprising flavoprotein FDXR (adrenodoxin/ferredoxin reductase) and nonheme iron-sulfur protein FDX1 or FDX2 (adrenodoxin/ferredoxin). Due to its lack of 18-oxidation activity, it is incapable of generating aldosterone. Could also be involved in the androgen metabolic pathway. The chain is Cytochrome P450 11B1, mitochondrial (CYP11B1) from Cavia porcellus (Guinea pig).